Here is a 569-residue protein sequence, read N- to C-terminus: 2-succinyl-5-enolpyruvyl-6-hydroxy-3-cyclohexene-1-carboxylate synthase (569 aa).

The protein belongs to the TPP enzyme family. MenD subfamily. Homodimer. It depends on Mg(2+) as a cofactor. Mn(2+) serves as cofactor. Requires thiamine diphosphate as cofactor.

It carries out the reaction isochorismate + 2-oxoglutarate + H(+) = 5-enolpyruvoyl-6-hydroxy-2-succinyl-cyclohex-3-ene-1-carboxylate + CO2. The protein operates within quinol/quinone metabolism; 1,4-dihydroxy-2-naphthoate biosynthesis; 1,4-dihydroxy-2-naphthoate from chorismate: step 2/7. Its pathway is quinol/quinone metabolism; menaquinone biosynthesis. Functionally, catalyzes the thiamine diphosphate-dependent decarboxylation of 2-oxoglutarate and the subsequent addition of the resulting succinic semialdehyde-thiamine pyrophosphate anion to isochorismate to yield 2-succinyl-5-enolpyruvyl-6-hydroxy-3-cyclohexene-1-carboxylate (SEPHCHC). The sequence is that of 2-succinyl-5-enolpyruvyl-6-hydroxy-3-cyclohexene-1-carboxylate synthase from Shewanella sediminis (strain HAW-EB3).